The chain runs to 198 residues: Photosystem I assembly protein Ycf4 (198 aa).

The tract at residues 1–20 (MTASTTINKGDSPNGDSSAS) is disordered. 2 consecutive transmembrane segments (helical) span residues 36–58 (YWWA…SSYL) and 78–100 (LVMG…VILW).

It belongs to the Ycf4 family.

Its subcellular location is the cellular thylakoid membrane. Its function is as follows. Seems to be required for the assembly of the photosystem I complex. This is Photosystem I assembly protein Ycf4 from Nostoc sp. (strain PCC 7120 / SAG 25.82 / UTEX 2576).